The following is a 539-amino-acid chain: Chaperonin GroEL (539 aa).

Residues 30–33, Lys-51, 87–91, Gly-415, and Asp-495 each bind ATP; these read TLGP and DGTTT.

Belongs to the chaperonin (HSP60) family. As to quaternary structure, forms a cylinder of 14 subunits composed of two heptameric rings stacked back-to-back. Interacts with the co-chaperonin GroES.

Its subcellular location is the cytoplasm. The catalysed reaction is ATP + H2O + a folded polypeptide = ADP + phosphate + an unfolded polypeptide.. In terms of biological role, together with its co-chaperonin GroES, plays an essential role in assisting protein folding. The GroEL-GroES system forms a nano-cage that allows encapsulation of the non-native substrate proteins and provides a physical environment optimized to promote and accelerate protein folding. In Serratia rubidaea (Serratia marinorubra), this protein is Chaperonin GroEL.